A 591-amino-acid chain; its full sequence is L-fucose isomerase (591 aa).

Active-site proton acceptor residues include Glu337 and Asp361. The Mn(2+) site is built by Glu337, Asp361, and His528.

This sequence belongs to the L-fucose isomerase family. In terms of assembly, homohexamer. It depends on Mn(2+) as a cofactor.

It is found in the cytoplasm. It catalyses the reaction L-fucose = L-fuculose. Its pathway is carbohydrate degradation; L-fucose degradation; L-lactaldehyde and glycerone phosphate from L-fucose: step 1/3. Functionally, converts the aldose L-fucose into the corresponding ketose L-fuculose. In Salmonella schwarzengrund (strain CVM19633), this protein is L-fucose isomerase.